The following is a 202-amino-acid chain: Imidazoleglycerol-phosphate dehydratase (202 aa).

The protein belongs to the imidazoleglycerol-phosphate dehydratase family.

It is found in the cytoplasm. The catalysed reaction is D-erythro-1-(imidazol-4-yl)glycerol 3-phosphate = 3-(imidazol-4-yl)-2-oxopropyl phosphate + H2O. Its pathway is amino-acid biosynthesis; L-histidine biosynthesis; L-histidine from 5-phospho-alpha-D-ribose 1-diphosphate: step 6/9. The chain is Imidazoleglycerol-phosphate dehydratase from Mycolicibacterium gilvum (strain PYR-GCK) (Mycobacterium gilvum (strain PYR-GCK)).